The primary structure comprises 225 residues: Plasma membrane-associated cation-binding protein 1 (225 aa).

Gly-2 carries N-myristoyl glycine lipidation. Thr-32 bears the Phosphothreonine mark. At Ser-107 the chain carries Phosphoserine. The segment covering 140 to 197 (PVEEVKAEEPAKTEEPAKTEGTSGEKEEIVEETKKGETPETAVVEEKKPEVEEKKEEA) has biased composition (basic and acidic residues). The interval 140-225 (PVEEVKAEEP…TAPVAEPPKP (86 aa)) is disordered. Residues Thr-152 and Thr-177 each carry the phosphothreonine modification.

It belongs to the DREPP family. Interacts with Turnip mosaic virus (TuMV) P3N-PIPO. The cofactor is Cu(2+). In terms of tissue distribution, mostly expressed in the basal region of hypocotyls. Expressed in seedlings, roots, shoots, stems, leaves (e.g. in epidermis and vascular tissues), flowers (e.g. in pistils and anthers) and siliques (at protein level).

The protein resides in the cell membrane. Its subcellular location is the cytoplasm. It localises to the cytoskeleton. It is found in the cell junction. The protein localises to the plasmodesma. Functionally, may be involved in intracellular signaling through interaction with PtdInsPs and calmodulin (CaM); may keep PtdInsPs attached to the plasma membrane until Ca(2+)-CaM reaches a competitive concentration subsequent to an increase triggered by a stimulus, thus leading to PtdInsPs release and subsequent activation of InsPs-dependent signaling cascade. Interacts competitively at the N-terminus with calcium ions and CaM (in a calcium-dependent manner), and with the phosphatidylinositol phosphates PtdIns(3,4,5)P(3), PtdIns(3,4)P(2), PtdIns(4,5)P(2) and PtdIns(3,5)P(2). Also binds weakly to PtdIns(3)P, PtdIns(4)P and PtdIns(5)P. Negative regulator of hypocotyl cell elongation by destabilizing cortical microtubules in a calcium-dependent manner. Binds directly to and destabilized microtubules to enhance microtubule depolymerization when cytoplasmic calcium increases. In case of Turnip mosaic virus (TuMV) infection, confers sensitivity by promoting viral cell-to-cell movement through interaction with viral P3N-PIPO. The protein is Plasma membrane-associated cation-binding protein 1 (PCAP1) of Arabidopsis thaliana (Mouse-ear cress).